The following is a 35-amino-acid chain: Photosystem II reaction center protein M (35 aa).

Residues 7–27 (GFIASILFVLVPTVFLLILFI) traverse the membrane as a helical segment.

It belongs to the PsbM family. In terms of assembly, PSII is composed of 1 copy each of membrane proteins PsbA, PsbB, PsbC, PsbD, PsbE, PsbF, PsbH, PsbI, PsbJ, PsbK, PsbL, PsbM, PsbT, PsbX, PsbY, PsbZ, Psb30/Ycf12, peripheral proteins PsbO, CyanoQ (PsbQ), PsbU, PsbV and a large number of cofactors. It forms dimeric complexes.

It is found in the cellular thylakoid membrane. One of the components of the core complex of photosystem II (PSII). PSII is a light-driven water:plastoquinone oxidoreductase that uses light energy to abstract electrons from H(2)O, generating O(2) and a proton gradient subsequently used for ATP formation. It consists of a core antenna complex that captures photons, and an electron transfer chain that converts photonic excitation into a charge separation. This subunit is found at the monomer-monomer interface. The sequence is that of Photosystem II reaction center protein M from Microcystis aeruginosa (strain NIES-843 / IAM M-2473).